Here is a 413-residue protein sequence, read N- to C-terminus: Putative F-box protein At3g58820 (413 aa).

The region spanning M1–D48 is the F-box domain.

This Arabidopsis thaliana (Mouse-ear cress) protein is Putative F-box protein At3g58820.